The following is a 390-amino-acid chain: tRNA (guanine(9)-N1)-methyltransferase (390 aa).

Residues 1-72 (MDIDEESYLN…RTAQLAEGYA (72 aa)) are disordered. A compositionally biased stretch (basic and acidic residues) spans 43 to 59 (ARLEEIKPLKRAAERER). The region spanning 92-340 (KERKEAQRRI…AVIPIRKYAP (249 aa)) is the SAM-dependent MTase TRM10-type domain. S-adenosyl-L-methionine is bound by residues 246 to 247 (LS), G266, 270 to 274 (DRNRH), C278, L292, and 305 to 307 (KVL). D270 (proton acceptor) is an active-site residue. The disordered stretch occupies residues 343–390 (KTKRAKTETKRNEKEEEEVECTSAEGEEDIGVIEESAEVDPEDVFSNQ). The segment covering 347 to 356 (AKTETKRNEK) has biased composition (basic and acidic residues). The segment covering 357–390 (EEEEVECTSAEGEEDIGVIEESAEVDPEDVFSNQ) has biased composition (acidic residues).

Belongs to the class IV-like SAM-binding methyltransferase superfamily. TRM10 family. In terms of assembly, monomer.

It localises to the cytoplasm. Its subcellular location is the nucleus. It catalyses the reaction guanosine(9) in tRNA + S-adenosyl-L-methionine = N(1)-methylguanosine(9) in tRNA + S-adenosyl-L-homocysteine + H(+). Its function is as follows. S-adenosyl-L-methionine-dependent guanine N(1)-methyltransferase that catalyzes the formation of N(1)-methylguanine at position 9 (m1G9) in cytoplasmic tRNA. This chain is tRNA (guanine(9)-N1)-methyltransferase, found in Cryptococcus neoformans var. neoformans serotype D (strain JEC21 / ATCC MYA-565) (Filobasidiella neoformans).